The sequence spans 632 residues: tRNA uridine 5-carboxymethylaminomethyl modification enzyme MnmG (632 aa).

Residues 13 to 18 (GGGHAG), Val125, and Ser180 contribute to the FAD site. Residue 273–287 (GPRYCPSIEDKVMRF) participates in NAD(+) binding. Gln370 serves as a coordination point for FAD.

The protein belongs to the MnmG family. As to quaternary structure, homodimer. Heterotetramer of two MnmE and two MnmG subunits. The cofactor is FAD.

The protein localises to the cytoplasm. Its function is as follows. NAD-binding protein involved in the addition of a carboxymethylaminomethyl (cmnm) group at the wobble position (U34) of certain tRNAs, forming tRNA-cmnm(5)s(2)U34. The chain is tRNA uridine 5-carboxymethylaminomethyl modification enzyme MnmG from Proteus mirabilis (strain HI4320).